A 234-amino-acid polypeptide reads, in one-letter code: 1-(5-phosphoribosyl)-5-[(5-phosphoribosylamino)methylideneamino] imidazole-4-carboxamide isomerase (234 aa).

The active-site Proton acceptor is aspartate 9. The active-site Proton donor is the aspartate 131.

The protein belongs to the HisA/HisF family.

It localises to the cytoplasm. The catalysed reaction is 1-(5-phospho-beta-D-ribosyl)-5-[(5-phospho-beta-D-ribosylamino)methylideneamino]imidazole-4-carboxamide = 5-[(5-phospho-1-deoxy-D-ribulos-1-ylimino)methylamino]-1-(5-phospho-beta-D-ribosyl)imidazole-4-carboxamide. The protein operates within amino-acid biosynthesis; L-histidine biosynthesis; L-histidine from 5-phospho-alpha-D-ribose 1-diphosphate: step 4/9. This is 1-(5-phosphoribosyl)-5-[(5-phosphoribosylamino)methylideneamino] imidazole-4-carboxamide isomerase from Staphylococcus aureus (strain bovine RF122 / ET3-1).